A 622-amino-acid chain; its full sequence is Phosphatidylinositol 4-kinase gamma 6 (622 aa).

The region spanning 38–95 (RRVFVQTDTGCVLGVELDRNDNVHTVKKRLQIAFNFPTEESSLTFGDMVLKNDLSAVR) is the Ubiquitin-like; degenerate domain. Residues 158–459 (GVEPIPVNGG…LTTEQDVLSP (302 aa)) form the PI3K/PI4K catalytic domain. The interval 164-170 (VNGGLGG) is G-loop. Residues 165–171 (NGGLGGA), K186, and 277–280 (QKFV) each bind ATP. The catalytic loop stretch occupies residues 310 to 318 (LNTDRHGGN). The segment at 339 to 365 (PIDHGLCLPETLEDPYFEWIHWPQASI) is activation loop. Residue D341 coordinates ATP. S565 carries the post-translational modification Phosphoserine.

It belongs to the PI3/PI4-kinase family. Type II PI4K subfamily.

The catalysed reaction is a 1,2-diacyl-sn-glycero-3-phospho-(1D-myo-inositol) + ATP = a 1,2-diacyl-sn-glycero-3-phospho-(1D-myo-inositol 4-phosphate) + ADP + H(+). The phosphorylation of phosphatidylinositol (PI) to PI4P is the first committed step in the generation of phosphatidylinositol 4,5-bisphosphate (PIP2), a precursor of the second messenger inositol 1,4,5-trisphosphate (InsP3). The polypeptide is Phosphatidylinositol 4-kinase gamma 6 (PI4KG6) (Arabidopsis thaliana (Mouse-ear cress)).